A 386-amino-acid polypeptide reads, in one-letter code: Cytotoxic granule associated RNA binding protein TIA1 (386 aa).

The residue at position 1 (methionine 1) is an N-acetylmethionine. RRM domains lie at 7-83, 106-184, and 214-286; these read KTLY…WATT, FHVF…WATR, and CTVY…WGKE. The disordered stretch occupies residues 355 to 376; that stretch reads GPNYSVPPPQGQNGSMLPSQPA.

Homooligomer; homooligomerization is induced by Zn(2+). Interacts with FASTK; the interactions leads to its phosphorylation. Interacts (via RRM1 and the C-terminal glutamine-rich (Q) sequence) with SNRPC/U1-C (via N-terminus); thereby facilitating spliceosomal U1 snRNP recruitment to 5' splice sites. Post-translationally, phosphorylatedby FASTK; phosphorylation occurs after FAS ligation in FAS-mediated apoptosis and before DNA fragmentation.

It is found in the nucleus. It localises to the cytoplasm. Its subcellular location is the stress granule. RNA-binding protein involved in the regulation of alternative pre-RNA splicing and mRNA translation by binding to uridine-rich (U-rich) RNA sequences. Binds to U-rich sequences immediately downstream from a 5' splice sites in a uridine-rich small nuclear ribonucleoprotein (U snRNP)-dependent fashion, thereby modulating alternative pre-RNA splicing. Preferably binds to the U-rich IAS1 sequence in a U1 snRNP-dependent manner; this binding is optimal if a 5' splice site is adjacent to IAS1. Activates the use of heterologous 5' splice sites; the activation depends on the intron sequence downstream from the 5' splice site, with a preference for a downstream U-rich sequence. By interacting with SNRPC/U1-C, promotes recruitment and binding of spliceosomal U1 snRNP to 5' splice sites followed by U-rich sequences, thereby facilitating atypical 5' splice site recognition by U1 snRNP. Activates splicing of alternative exons with weak 5' splice sites followed by a U-rich stretch on its own pre-mRNA and on TIAR mRNA. Acts as a modulator of alternative splicing for the apoptotic FAS receptor, thereby promoting apoptosis. Binds to the 5' splice site region of FAS intron 5 to promote accumulation of transcripts that include exon 6 at the expense of transcripts in which exon 6 is skipped, thereby leading to the transcription of a membrane-bound apoptotic FAS receptor, which promotes apoptosis. Binds to a conserved AU-rich cis element in COL2A1 intron 2 and modulates alternative splicing of COL2A1 exon 2. Also binds to the equivalent AT-rich element in COL2A1 genomic DNA, and may thereby be involved in the regulation of transcription. Involved in the repression of mRNA translation by binding to AU-rich elements (AREs) located in mRNA 3' untranslated regions (3' UTRs), including target ARE-bearing mRNAs encoding TNF and PTGS2. Also participates in the cellular response to environmental stress, by acting downstream of the stress-induced phosphorylation of EIF2S1/EIF2A to promote the recruitment of untranslated mRNAs to cytoplasmic stress granules (SGs), leading to stress-induced translational arrest. Formation and recruitment to SGs is regulated by Zn(2+). Possesses nucleolytic activity against cytotoxic lymphocyte target cells. The chain is Cytotoxic granule associated RNA binding protein TIA1 (Tia1) from Mus musculus (Mouse).